The chain runs to 649 residues: Arylsulfatase (649 aa).

A signal peptide spans 1–22 (MLQRLVVALCLLGFAALTAAAA). Ca(2+) is bound by residues D34 and D35. N-linked (GlcNAc...) asparagine glycosylation is present at N41. A Ca(2+)-binding site is contributed by C72. C72 functions as the Nucleophile in the catalytic mechanism. Residue C72 is modified to 3-oxoalanine (Cys). Residues N89, N224, and N279 are each glycosylated (N-linked (GlcNAc...) asparagine). 2 residues coordinate Ca(2+): D324 and N325. N-linked (GlcNAc...) asparagine glycans are attached at residues N445, N489, and N531.

This sequence belongs to the sulfatase family. Ca(2+) is required as a cofactor. Post-translationally, the conversion to 3-oxoalanine (also known as C-formylglycine, FGly), of a serine or cysteine residue in prokaryotes and of a cysteine residue in eukaryotes, is critical for catalytic activity.

The protein resides in the periplasm. The catalysed reaction is an aryl sulfate + H2O = a phenol + sulfate + H(+). With respect to regulation, inhibited by Na(3)BO(3) and KCN. No inhibition by sodium dodecyl sulfate, even at high concentration. Its function is as follows. Is commonly produced by soil microorganisms and plays an important role in the mineralization of sulfates. The chain is Arylsulfatase from Volvox carteri (Green alga).